A 453-amino-acid polypeptide reads, in one-letter code: V-type proton ATPase subunit B (453 aa).

ATP is bound at residue Arg-341.

The protein belongs to the ATPase alpha/beta chains family. In terms of assembly, V-ATPase is a heteromultimeric enzyme made up of two complexes: the ATP-hydrolytic V1 complex and the proton translocation V0 complex. The V1 complex consists of three catalytic AB heterodimers that form a heterohexamer, three peripheral stalks each consisting of EG heterodimers, one central rotor including subunits D and F, and the regulatory subunits C and H. The proton translocation complex V0 consists of the proton transport subunit a, a ring of proteolipid subunits c9c'', rotary subunit d, subunits e and f, and two accessory subunits.

Non-catalytic subunit of the V1 complex of vacuolar(H+)-ATPase (V-ATPase), a multisubunit enzyme composed of a peripheral complex (V1) that hydrolyzes ATP and a membrane integral complex (V0) that translocates protons. V-ATPase is responsible for acidifying and maintaining the pH of intracellular compartments and in some cell types, is targeted to the plasma membrane, where it is responsible for acidifying the extracellular environment. Essential for the proper assembly and activity of V-ATPase. The protein is V-type proton ATPase subunit B (ATP6V1B) of Gallus gallus (Chicken).